We begin with the raw amino-acid sequence, 463 residues long: Polyadenylate-binding protein-interacting protein 1 (463 aa).

The interval 1–86 (MSDGFERAPG…HKRTSPAAQL (86 aa)) is disordered. In terms of domain architecture, MIF4G spans 145–362 (TEYVQDFLNH…LKLVELRSSN (218 aa)). The disordered stretch occupies residues 420 to 442 (RDYDENGTDGGDSYFEDDDDNEM). The span at 433–442 (YFEDDDDNEM) shows a compositional bias: acidic residues.

In terms of assembly, interacts with the RRM1-RRM2 and C-terminal regions of epabp.

The protein resides in the cytoplasm. Acts as a coactivator in the regulation of translation initiation of poly(A)-containing mRNAs. The protein is Polyadenylate-binding protein-interacting protein 1 of Xenopus laevis (African clawed frog).